Consider the following 316-residue polypeptide: Putative ubiquitin-conjugating enzyme E2 39 (316 aa).

In terms of domain architecture, UBC core spans 57–217 (NWVKDIQKEW…VFVFSLKTMH (161 aa)). Cysteine 143 (glycyl thioester intermediate) is an active-site residue.

The protein belongs to the ubiquitin-conjugating enzyme family.

The enzyme catalyses S-ubiquitinyl-[E1 ubiquitin-activating enzyme]-L-cysteine + [E2 ubiquitin-conjugating enzyme]-L-cysteine = [E1 ubiquitin-activating enzyme]-L-cysteine + S-ubiquitinyl-[E2 ubiquitin-conjugating enzyme]-L-cysteine.. It functions in the pathway protein modification; protein ubiquitination. Its function is as follows. Accepts the ubiquitin from the E1 complex and catalyzes its covalent attachment to other proteins. This Arabidopsis thaliana (Mouse-ear cress) protein is Putative ubiquitin-conjugating enzyme E2 39 (UBC39).